A 199-amino-acid polypeptide reads, in one-letter code: Nucleoid occlusion factor SlmA (199 aa).

The region spanning 10 to 71 is the HTH tetR-type domain; that stretch reads RNRREEILQA…SLIEFIEDSL (62 aa). The H-T-H motif DNA-binding region spans 34–53; the sequence is TTAKLAANVGVSEAALYRHF. The stretch at 120–140 forms a coiled coil; it reads NRLQGRINQLFERIEVQIRQV.

Belongs to the nucleoid occlusion factor SlmA family. As to quaternary structure, homodimer. Interacts with FtsZ.

The protein localises to the cytoplasm. The protein resides in the nucleoid. In terms of biological role, required for nucleoid occlusion (NO) phenomenon, which prevents Z-ring formation and cell division over the nucleoid. Acts as a DNA-associated cell division inhibitor that binds simultaneously chromosomal DNA and FtsZ, and disrupts the assembly of FtsZ polymers. SlmA-DNA-binding sequences (SBS) are dispersed on non-Ter regions of the chromosome, preventing FtsZ polymerization at these regions. The protein is Nucleoid occlusion factor SlmA of Photorhabdus laumondii subsp. laumondii (strain DSM 15139 / CIP 105565 / TT01) (Photorhabdus luminescens subsp. laumondii).